The primary structure comprises 141 residues: Nucleoside triphosphatase NudI (141 aa).

A Nudix hydrolase domain is found at 1-141 (MRQRTIVCPL…RHTLRLKGLL (141 aa)). A Nudix box motif is present at residues 38–59 (GGVEPGERIEEALRREIREELG).

This sequence belongs to the Nudix hydrolase family. NudI subfamily. As to quaternary structure, monomer. The cofactor is Mg(2+).

It catalyses the reaction a ribonucleoside 5'-triphosphate + H2O = a ribonucleoside 5'-phosphate + diphosphate + H(+). The enzyme catalyses a 2'-deoxyribonucleoside 5'-triphosphate + H2O = a 2'-deoxyribonucleoside 5'-phosphate + diphosphate + H(+). The catalysed reaction is dUTP + H2O = dUMP + diphosphate + H(+). It carries out the reaction dTTP + H2O = dTMP + diphosphate + H(+). It catalyses the reaction dCTP + H2O = dCMP + diphosphate + H(+). Catalyzes the hydrolysis of nucleoside triphosphates, with a preference for pyrimidine deoxynucleoside triphosphates (dUTP, dTTP and dCTP). This is Nucleoside triphosphatase NudI from Salmonella arizonae (strain ATCC BAA-731 / CDC346-86 / RSK2980).